We begin with the raw amino-acid sequence, 68 residues long: MELYREYPAWLIFLRRTYAVAAGVLALPFMLFWKDRARFYSYLHRVWSKTSDKPVWMDQAEKATGDFY.

The signal sequence occupies residues Met1–Ala21.

This is an uncharacterized protein from Escherichia coli O157:H7.